Consider the following 1374-residue polypeptide: DNA-directed RNA polymerase subunit beta (1374 aa).

The protein belongs to the RNA polymerase beta chain family. In terms of assembly, the RNAP catalytic core consists of 2 alpha, 1 beta, 1 beta' and 1 omega subunit. When a sigma factor is associated with the core the holoenzyme is formed, which can initiate transcription.

It carries out the reaction RNA(n) + a ribonucleoside 5'-triphosphate = RNA(n+1) + diphosphate. Its function is as follows. DNA-dependent RNA polymerase catalyzes the transcription of DNA into RNA using the four ribonucleoside triphosphates as substrates. The chain is DNA-directed RNA polymerase subunit beta from Acidovorax sp. (strain JS42).